Reading from the N-terminus, the 660-residue chain is T-box protein H15 (660 aa).

Positions 1 to 11 are enriched in polar residues; sequence MLLSNQPANTK. Disordered stretches follow at residues 1–72, 90–122, and 169–266; these read MLLS…NHNQ, GGNAPSSREPSERSLSPASVERYSGQDADDDVD, and QQQQ…PKIV. Residues 12 to 22 show a composition bias toward low complexity; the sequence is PQQTPSPSQTQ. Over residues 23 to 33 the composition is skewed to polar residues; the sequence is NFKSKLQQQIV. Over residues 35–47 the composition is skewed to low complexity; the sequence is AAAAAAANIANGS. The span at 48-71 shows a compositional bias: basic residues; that stretch reads SHHHHHQNHHHHHPLNNHHNHNHN. Composition is skewed to low complexity over residues 93–108 and 169–179; these read APSSREPSERSLSPAS and QQQQQQQQQRQ. The span at 180-198 shows a compositional bias: basic residues; it reads QTHHHATTGKQQRQHHNHH. Positions 199–233 are enriched in low complexity; it reads SSNTNNSSNSGNSNTNSKSSSQRGRSAAAVGAAAT. The span at 234-243 shows a compositional bias: pro residues; that stretch reads PSPPPPPPSQ. The T-box DNA-binding region spans 286 to 472; the sequence is LWDKFHELGT…SNPFAKGFRD (187 aa). The segment at 598-660 is disordered; the sequence is NRTPPPSMAV…PPASNRAESP (63 aa). Positions 600 to 613 are enriched in pro residues; sequence TPPPSMAVAPPAPA. The span at 614 to 624 shows a compositional bias: low complexity; the sequence is TPTSSCGSASP. Positions 643–660 are enriched in polar residues; sequence QVPQHQASPPASNRAESP.

It localises to the nucleus. This is T-box protein H15 (H15) from Drosophila melanogaster (Fruit fly).